Consider the following 1984-residue polypeptide: Vitellogenin receptor Yl (1984 aa).

The span at 1–19 (MCQAEHQVHPSEQRIRVES) shows a compositional bias: basic and acidic residues. The segment at 1–48 (MCQAEHQVHPSEQRIRVESPKMTASRRGFNLTSQTRAHPSSGGSTSSR) is disordered. N-linked (GlcNAc...) asparagine glycosylation is present at N30. The segment covering 30-48 (NLTSQTRAHPSSGGSTSSR) has biased composition (polar residues). 5 LDL-receptor class A domains span residues 89–125 (RCDA…LDCD), 128–167 (LCRP…LNCP), 183–221 (SCSK…AGCK), 226–263 (TCPG…RGCL), and 265–305 (LCEP…DLCH). 20 disulfide bridges follow: C90/C102, C97/C115, C109/C124, C129/C144, C137/C157, C151/C166, C184/C197, C191/C210, C204/C220, C227/C239, C234/C253, C247/C262, C266/C281, C275/C294, C288/C304, C310/C321, C315/C331, C352/C363, C359/C372, and C374/C387. The 38-residue stretch at 306 to 343 (SKPDCDAKKCALGAKCHMMPASGAECFCPKGFRLAKFE) folds into the EGF-like 1 domain. In terms of domain architecture, EGF-like 2; calcium-binding spans 348–388 (DVDECKEQDDLCSQGCENTSGGYRCVCDAGYLLDKDNRTCR). N-linked (GlcNAc...) asparagine glycosylation is found at N365, N384, and N429. LDL-receptor class B repeat units lie at residues 441-485 (SHIY…DWLT), 486-528 (QNIY…WPQK), 529-572 (GLMF…DMHQ), and 573-615 (QRIY…FEDQ). N666, N749, and N782 each carry an N-linked (GlcNAc...) asparagine glycan. LDL-receptor class B repeat units lie at residues 750 to 792 (GSLI…DHLS), 793 to 836 (RNLY…MPAE), 884 to 925 (QTIF…VHHD), and 934 to 940 (PRIYWTH). N1022 carries an N-linked (GlcNAc...) asparagine glycan. 5 consecutive LDL-receptor class A domains span residues 1024 to 1063 (TCVE…MNCD), 1073 to 1110 (LCSP…QHCE), 1117 to 1153 (KCHV…LLCE), 1157 to 1194 (RCEP…DKCV), and 1197 to 1233 (SCPP…LNCG). 15 cysteine pairs are disulfide-bonded: C1025/C1040, C1035/C1053, C1047/C1062, C1074/C1087, C1081/C1100, C1094/C1109, C1118/C1130, C1125/C1143, C1137/C1152, C1158/C1170, C1165/C1183, C1177/C1193, C1198/C1210, C1205/C1223, and C1217/C1232. Residue N1240 is glycosylated (N-linked (GlcNAc...) asparagine). 2 consecutive LDL-receptor class A domains span residues 1242 to 1280 (SCAE…ADCG) and 1282 to 1319 (VCSI…LSCE). 6 cysteine pairs are disulfide-bonded: C1243–C1257, C1250–C1270, C1264–C1279, C1283–C1296, C1290–C1309, and C1303–C1318. An N-linked (GlcNAc...) asparagine glycan is attached at N1265. N-linked (GlcNAc...) asparagine glycosylation occurs at N1326. The LDL-receptor class A 13 domain occupies 1339–1376 (SCRPHLFDCQDGECVDLSRVCNNFPDCTNGHDEGPKCA). Disulfide bonds link C1340-C1352, C1347-C1365, C1359-C1375, C1422-C1432, and C1428-C1441. Residues 1418 to 1453 (DIDECQEQQPCAQLCENTLGGYQCQCHADFMLRQDR) enclose the EGF-like 3; calcium-binding domain. Residues N1475 and N1490 are each glycosylated (N-linked (GlcNAc...) asparagine). 2 LDL-receptor class B repeats span residues 1588 to 1637 (ARIF…DPHQ) and 1638 to 1687 (QLLY…YENN). Residues 1800-1820 (WLMALFVLAAGSLIAGLGYMY) traverse the membrane as a helical segment. At 1821–1984 (YQYRQRGHTD…GNDANARFVS (164 aa)) the chain is on the cytoplasmic side. Position 1926 is a phosphoserine (S1926). Disordered stretches follow at residues 1927–1951 (KLHA…RQVP) and 1965–1984 (SAGQ…RFVS). The span at 1932–1946 (DGGGAGGDGDGGRGV) shows a compositional bias: gly residues.

Belongs to the LDLR family. Interacts with osk (isoform A). As to expression, ovary.

The protein localises to the cell membrane. It localises to the cytoplasm. Its subcellular location is the cell cortex. The protein resides in the cytoplasmic vesicle. It is found in the clathrin-coated vesicle membrane. The protein localises to the early endosome membrane. It localises to the endosome. Its subcellular location is the multivesicular body lumen. Functionally, cell surface receptor involved in uptake of vitellogenins (yolk proteins) into developing oocytes by receptor-mediated endocytosis. May also mediate uptake of apolpp/apolipophorins and their incorporation into yolk granules. Along with its ligands, required for maintenance of microtubule plus-end orientation towards the posterior pole of oocytes. Involved in polarized localization of germ plasm components, such as osk mRNA and vas protein, to the oocyte posterior cortex. Receptor-mediated endocytosis of vitellogenin receptor ligands is critical for osk (isoform A) mediated actin reorganization and the anchoring of germ plasm components to the oocyte cortex. This chain is Vitellogenin receptor Yl, found in Drosophila melanogaster (Fruit fly).